The chain runs to 289 residues: Phosphatidylserine decarboxylase proenzyme (289 aa).

Catalysis depends on charge relay system; for autoendoproteolytic cleavage activity residues aspartate 92, histidine 149, and serine 254. Serine 254 acts as the Schiff-base intermediate with substrate; via pyruvic acid; for decarboxylase activity in catalysis. Residue serine 254 is modified to Pyruvic acid (Ser); by autocatalysis.

It belongs to the phosphatidylserine decarboxylase family. PSD-B subfamily. Prokaryotic type I sub-subfamily. In terms of assembly, heterodimer of a large membrane-associated beta subunit and a small pyruvoyl-containing alpha subunit. Pyruvate is required as a cofactor. In terms of processing, is synthesized initially as an inactive proenzyme. Formation of the active enzyme involves a self-maturation process in which the active site pyruvoyl group is generated from an internal serine residue via an autocatalytic post-translational modification. Two non-identical subunits are generated from the proenzyme in this reaction, and the pyruvate is formed at the N-terminus of the alpha chain, which is derived from the carboxyl end of the proenzyme. The autoendoproteolytic cleavage occurs by a canonical serine protease mechanism, in which the side chain hydroxyl group of the serine supplies its oxygen atom to form the C-terminus of the beta chain, while the remainder of the serine residue undergoes an oxidative deamination to produce ammonia and the pyruvoyl prosthetic group on the alpha chain. During this reaction, the Ser that is part of the protease active site of the proenzyme becomes the pyruvoyl prosthetic group, which constitutes an essential element of the active site of the mature decarboxylase.

The protein localises to the cell membrane. It carries out the reaction a 1,2-diacyl-sn-glycero-3-phospho-L-serine + H(+) = a 1,2-diacyl-sn-glycero-3-phosphoethanolamine + CO2. The protein operates within phospholipid metabolism; phosphatidylethanolamine biosynthesis; phosphatidylethanolamine from CDP-diacylglycerol: step 2/2. Functionally, catalyzes the formation of phosphatidylethanolamine (PtdEtn) from phosphatidylserine (PtdSer). This chain is Phosphatidylserine decarboxylase proenzyme, found in Pseudomonas aeruginosa (strain UCBPP-PA14).